The primary structure comprises 153 residues: Putative transcription factor YdeB (153 aa).

It belongs to the CarD family.

The protein is Putative transcription factor YdeB (ydeB) of Bacillus subtilis (strain 168).